Reading from the N-terminus, the 405-residue chain is S-adenosylmethionine synthase (405 aa).

His19 contributes to the ATP binding site. Asp21 provides a ligand contact to Mg(2+). A K(+)-binding site is contributed by Glu47. The L-methionine site is built by Glu60 and Gln103. The segment at 103–113 (QSADIAQGVDK) is flexible loop. Residues 179–181 (DGK), 246–247 (RF), Asp255, 261–262 (RK), Ala278, and Lys282 contribute to the ATP site. Asp255 serves as a coordination point for L-methionine. Residue Lys286 coordinates L-methionine.

The protein belongs to the AdoMet synthase family. Homotetramer; dimer of dimers. It depends on Mg(2+) as a cofactor. K(+) is required as a cofactor.

It is found in the cytoplasm. The catalysed reaction is L-methionine + ATP + H2O = S-adenosyl-L-methionine + phosphate + diphosphate. Its pathway is amino-acid biosynthesis; S-adenosyl-L-methionine biosynthesis; S-adenosyl-L-methionine from L-methionine: step 1/1. Its function is as follows. Catalyzes the formation of S-adenosylmethionine (AdoMet) from methionine and ATP. The overall synthetic reaction is composed of two sequential steps, AdoMet formation and the subsequent tripolyphosphate hydrolysis which occurs prior to release of AdoMet from the enzyme. This Shouchella clausii (strain KSM-K16) (Alkalihalobacillus clausii) protein is S-adenosylmethionine synthase.